A 240-amino-acid chain; its full sequence is Enolase-phosphatase E1 (240 aa).

The protein belongs to the HAD-like hydrolase superfamily. MasA/MtnC family. Monomer. The cofactor is Mg(2+).

The enzyme catalyses 5-methylsulfanyl-2,3-dioxopentyl phosphate + H2O = 1,2-dihydroxy-5-(methylsulfanyl)pent-1-en-3-one + phosphate. Its pathway is amino-acid biosynthesis; L-methionine biosynthesis via salvage pathway; L-methionine from S-methyl-5-thio-alpha-D-ribose 1-phosphate: step 3/6. It functions in the pathway amino-acid biosynthesis; L-methionine biosynthesis via salvage pathway; L-methionine from S-methyl-5-thio-alpha-D-ribose 1-phosphate: step 4/6. Bifunctional enzyme that catalyzes the enolization of 2,3-diketo-5-methylthiopentyl-1-phosphate (DK-MTP-1-P) into the intermediate 2-hydroxy-3-keto-5-methylthiopentenyl-1-phosphate (HK-MTPenyl-1-P), which is then dephosphorylated to form the acireductone 1,2-dihydroxy-3-keto-5-methylthiopentene (DHK-MTPene). The polypeptide is Enolase-phosphatase E1 (Saccharopolyspora erythraea (strain ATCC 11635 / DSM 40517 / JCM 4748 / NBRC 13426 / NCIMB 8594 / NRRL 2338)).